An 829-amino-acid polypeptide reads, in one-letter code: High affinity cAMP-specific and IBMX-insensitive 3',5'-cyclic phosphodiesterase 8A (829 aa).

The interval Glu-16–Arg-46 is disordered. Ser-20 is modified (phosphoserine). The PAS domain maps to Ala-213 to Gly-283. The region spanning Gln-287–Asn-329 is the PAC domain. The interval Ser-341–Leu-360 is disordered. Position 359 is a phosphoserine; by PKA (Ser-359). Phosphoserine occurs at positions 386 and 457. Residues Arg-454–Tyr-461 are involved in RAF1-binding. Tyr-461 is subject to Phosphotyrosine. Positions Ser-480–Lys-820 constitute a PDEase domain. His-556 acts as the Proton donor in catalysis. Residues His-560, His-596, Asp-597, and Asp-726 each contribute to the a divalent metal cation site.

Belongs to the cyclic nucleotide phosphodiesterase family. PDE8 subfamily. As to quaternary structure, interacts with RAF1. The interaction promotes RAF1 activity. Requires a divalent metal cation as cofactor. Post-translationally, phosphorylated at Ser-359 by PKA under elevated cAMP conditions, this enhances catalytic activity. As to expression, expressed in most tissues except thymus and peripheral blood leukocytes. Highest levels in testis, ovary, small intestine and colon.

The catalysed reaction is 3',5'-cyclic AMP + H2O = AMP + H(+). Its pathway is purine metabolism; 3',5'-cyclic AMP degradation; AMP from 3',5'-cyclic AMP: step 1/1. Its activity is regulated as follows. Inhibited by dipyridimole. Insensitive to selective PDE inhibitors including rolipram and zaprinast as well as to the non-selective inhibitor, IBMX. Unaffected by cGMP. Its function is as follows. Hydrolyzes the second messenger cAMP, which is a key regulator of many important physiological processes. May be involved in maintaining basal levels of the cyclic nucleotide and/or in the cAMP regulation of germ cell development. Binding to RAF1 reduces RAF1 'Ser-259' inhibitory-phosphorylation and stimulates RAF1-dependent EGF-activated ERK-signaling. Protects against cell death induced by hydrogen peroxide and staurosporine. The sequence is that of High affinity cAMP-specific and IBMX-insensitive 3',5'-cyclic phosphodiesterase 8A (PDE8A) from Homo sapiens (Human).